The primary structure comprises 208 residues: Large ribosomal subunit protein uL3 (208 aa).

Gln-149 is modified (N5-methylglutamine).

Belongs to the universal ribosomal protein uL3 family. In terms of assembly, part of the 50S ribosomal subunit. Forms a cluster with proteins L14 and L19. In terms of processing, methylated by PrmB.

One of the primary rRNA binding proteins, it binds directly near the 3'-end of the 23S rRNA, where it nucleates assembly of the 50S subunit. The polypeptide is Large ribosomal subunit protein uL3 (Haemophilus influenzae (strain PittGG)).